The primary structure comprises 261 residues: Pimeloyl-[acyl-carrier protein] methyl ester esterase (261 aa).

The 229-residue stretch at 15 to 243 (HLVLLHGWGL…AAHAPFISHP (229 aa)) folds into the AB hydrolase-1 domain. Residues Trp22, 83-84 (SL), and 144-148 (FLALQ) contribute to the substrate site. Ser83 (nucleophile) is an active-site residue. Residues Asp208 and His236 contribute to the active site. His236 lines the substrate pocket.

Belongs to the AB hydrolase superfamily. Carboxylesterase BioH family. In terms of assembly, monomer.

The protein localises to the cytoplasm. The catalysed reaction is 6-carboxyhexanoyl-[ACP] methyl ester + H2O = 6-carboxyhexanoyl-[ACP] + methanol + H(+). It functions in the pathway cofactor biosynthesis; biotin biosynthesis. Its function is as follows. The physiological role of BioH is to remove the methyl group introduced by BioC when the pimeloyl moiety is complete. It allows to synthesize pimeloyl-ACP via the fatty acid synthetic pathway through the hydrolysis of the ester bonds of pimeloyl-ACP esters. The sequence is that of Pimeloyl-[acyl-carrier protein] methyl ester esterase from Proteus mirabilis (strain HI4320).